A 201-amino-acid polypeptide reads, in one-letter code: Ubiquitin-conjugating enzyme E2 E2 (201 aa).

Residues 1–10 (MSTEAQRVDD) show a composition bias toward basic and acidic residues. The disordered stretch occupies residues 1–55 (MSTEAQRVDDSPSTSGGSSDGDQRESVQQEPDREQVQPKKKEGKISSKTAAKLST). Ser-2 is subject to N-acetylserine. Phosphoserine is present on residues Ser-11, Ser-15, Ser-18, and Ser-19. Basic and acidic residues predominate over residues 21–45 (GDQRESVQQEPDREQVQPKKKEGKI). Residues 46–55 (SSKTAAKLST) show a composition bias toward low complexity. In terms of domain architecture, UBC core spans 55–201 (TSAKRIQKEL…ARQWTKRYAT (147 aa)). Cys-139 functions as the Glycyl thioester intermediate in the catalytic mechanism.

Belongs to the ubiquitin-conjugating enzyme family. In terms of processing, autoubiquitinated.

It catalyses the reaction S-ubiquitinyl-[E1 ubiquitin-activating enzyme]-L-cysteine + [E2 ubiquitin-conjugating enzyme]-L-cysteine = [E1 ubiquitin-activating enzyme]-L-cysteine + S-ubiquitinyl-[E2 ubiquitin-conjugating enzyme]-L-cysteine.. It functions in the pathway protein modification; protein ubiquitination. Accepts ubiquitin from the E1 complex and catalyzes its covalent attachment to other proteins. In vitro catalyzes 'Lys-11'- and 'Lys-48'-, as well as 'Lys-63'-linked polyubiquitination. Catalyzes the ISGylation of influenza A virus NS1 protein. The sequence is that of Ubiquitin-conjugating enzyme E2 E2 (Ube2e2) from Mus musculus (Mouse).